A 256-amino-acid chain; its full sequence is Hemin import ATP-binding protein HmuV (256 aa).

The 237-residue stretch at 2 to 238 (ISAQNLVYSL…QELTMLYGAD (237 aa)) folds into the ABC transporter domain. 34–41 (GPNGAGKS) is an ATP binding site.

This sequence belongs to the ABC transporter superfamily. Heme (hemin) importer (TC 3.A.1.14.5) family. The complex is composed of two ATP-binding proteins (HmuV), two transmembrane proteins (HmuU) and a solute-binding protein (HmuT).

The protein resides in the cell inner membrane. Functionally, part of the ABC transporter complex HmuTUV involved in hemin import. Responsible for energy coupling to the transport system. This Shigella dysenteriae protein is Hemin import ATP-binding protein HmuV.